Here is a 669-residue protein sequence, read N- to C-terminus: MTIPLEIQQRCQQLKTELQRASYAYYVLDDPFIPDSVYDQLYRELEDIEKRYPQLITPDSPTQRVGDKISSQFVSVRHNIPLYSLENAFNLEELNKWGNRWQRYVNETQDTEYVCELKIDGSALALTYENGFLVRGVTRGDGVTGEDITPNVRTIRSIPLRLNIDNPPAIVEVRGEAFLPLDTFDKINQEREEKRESLFANPRNAAAGTLRQLDPKIVDKRRLQFFAYTLHLDDNNITNQWQSLDRLESMGFLVNPHRQLCPSLQQVAQYYQDWQEKRHQLAYMTDGVVVKINDLQRQNRLGFTQKFPRWAIALKYPAEEVPTVVKDIIINVGRTGAVTPMAVMEPVQVAGTTVQRATLHNSDRVAELDIRVGDTVIIRKAGEIIPEVVRILPELRPNHTSPFQMPTNCPECQSPLVRPVGEAVTRCVNSSCPAILRGSVVHWASRDALDIRGLGEKVVILLIEQGLVTAISDLYSLEKTEIAKLDRMGEKSALNLITAMAQSKNQSWSRVLYGLGIRYVGSVNAKILAESFRTVEELANASVTDLASIYGIGEEIAQSVYDWFRIEANRDLVAKLQAAGLQFAAAAKTTTTKATLAGKTFVITGTLPTLKREEAKELIEKAGGKVTGSVSKKTDYLVLGEAAGSKLEKALELGITQLTEAQLLELIKA.

Residues 35 to 39 (DSVYD), 84 to 85 (SL), and E116 each bind NAD(+). Residue K118 is the N6-AMP-lysine intermediate of the active site. The NAD(+) site is built by R139, E176, K291, and K315. Positions 409, 412, 427, and 432 each coordinate Zn(2+). Residues 591-669 (TTKATLAGKT…EAQLLELIKA (79 aa)) form the BRCT domain.

This sequence belongs to the NAD-dependent DNA ligase family. LigA subfamily. The cofactor is Mg(2+). Mn(2+) serves as cofactor.

It carries out the reaction NAD(+) + (deoxyribonucleotide)n-3'-hydroxyl + 5'-phospho-(deoxyribonucleotide)m = (deoxyribonucleotide)n+m + AMP + beta-nicotinamide D-nucleotide.. In terms of biological role, DNA ligase that catalyzes the formation of phosphodiester linkages between 5'-phosphoryl and 3'-hydroxyl groups in double-stranded DNA using NAD as a coenzyme and as the energy source for the reaction. It is essential for DNA replication and repair of damaged DNA. This Microcystis aeruginosa (strain NIES-843 / IAM M-2473) protein is DNA ligase.